A 436-amino-acid chain; its full sequence is Tol-Pal system protein TolB (436 aa).

Positions 1–28 (MEMLRRNFFRLLMVLVAGCGLIASPANA) are cleaved as a signal peptide.

The protein belongs to the TolB family. In terms of assembly, the Tol-Pal system is composed of five core proteins: the inner membrane proteins TolA, TolQ and TolR, the periplasmic protein TolB and the outer membrane protein Pal. They form a network linking the inner and outer membranes and the peptidoglycan layer.

Its subcellular location is the periplasm. In terms of biological role, part of the Tol-Pal system, which plays a role in outer membrane invagination during cell division and is important for maintaining outer membrane integrity. This is Tol-Pal system protein TolB from Rhizobium meliloti (strain 1021) (Ensifer meliloti).